The chain runs to 459 residues: UDP-N-acetylmuramoylalanine--D-glutamate ligase (459 aa).

ATP is bound at residue 120–126; that stretch reads GSNGKTT.

This sequence belongs to the MurCDEF family.

Its subcellular location is the cytoplasm. It catalyses the reaction UDP-N-acetyl-alpha-D-muramoyl-L-alanine + D-glutamate + ATP = UDP-N-acetyl-alpha-D-muramoyl-L-alanyl-D-glutamate + ADP + phosphate + H(+). It participates in cell wall biogenesis; peptidoglycan biosynthesis. Its function is as follows. Cell wall formation. Catalyzes the addition of glutamate to the nucleotide precursor UDP-N-acetylmuramoyl-L-alanine (UMA). The protein is UDP-N-acetylmuramoylalanine--D-glutamate ligase of Lactobacillus helveticus (strain DPC 4571).